The chain runs to 221 residues: GDP-perosamine N-acetyltransferase (221 aa).

The Proton acceptor role is filled by H139.

The protein belongs to the transferase hexapeptide repeat family. As to quaternary structure, homotrimer.

The enzyme catalyses GDP-alpha-D-perosamine + acetyl-CoA = GDP-N-acetyl-alpha-D-perosamine + CoA + H(+). Its pathway is bacterial outer membrane biogenesis; LPS O-antigen biosynthesis. Functionally, catalyzes the transfer of an acetyl residue from acetyl-CoA onto GDP-perosamine to form GDP-N-acetyl-perosamine. This is GDP-perosamine N-acetyltransferase from Escherichia coli O157:H7.